Consider the following 400-residue polypeptide: Cysteine desulfurase (400 aa).

Pyridoxal 5'-phosphate contacts are provided by residues 72-73 (GT), asparagine 152, glutamine 180, and 200-202 (SGH). Lysine 203 carries the post-translational modification N6-(pyridoxal phosphate)lysine. Position 238 (threonine 238) interacts with pyridoxal 5'-phosphate. The active-site Cysteine persulfide intermediate is the cysteine 326. Cysteine 326 serves as a coordination point for [2Fe-2S] cluster.

This sequence belongs to the class-V pyridoxal-phosphate-dependent aminotransferase family. NifS/IscS subfamily. Homodimer. Requires pyridoxal 5'-phosphate as cofactor.

It catalyses the reaction (sulfur carrier)-H + L-cysteine = (sulfur carrier)-SH + L-alanine. Functionally, catalyzes the removal of elemental sulfur atoms from cysteine to produce alanine. Seems to participate in the biosynthesis of the nitrogenase metalloclusters by providing the inorganic sulfur required for the Fe-S core formation. This is Cysteine desulfurase from Gluconacetobacter diazotrophicus (strain ATCC 49037 / DSM 5601 / CCUG 37298 / CIP 103539 / LMG 7603 / PAl5).